A 202-amino-acid polypeptide reads, in one-letter code: Securin (202 aa).

A2 bears the N-acetylalanine mark. Positions 35 to 90 are disordered; sequence LDGRSQVSTPRFGKTFDAPPALPKATRKALGTVNRATEKSVKTKGPLKQKQPSFSA. Residues 61–64 carry the D-box motif; sequence RKAL. 2 short sequence motifs (TEK-box) span residues 71–73 and 94–96; these read TEK. An SH3-binding motif is present at residues 163–173; the sequence is PPSPVKMPSPP. Phosphoserine; by CDK1 is present on S165.

The protein belongs to the securin family. As to quaternary structure, interacts with RPS10 and DNAJA1. Interacts with the caspase-like ESPL1, and prevents its protease activity probably by covering its active site. Interacts with TP53 and blocks its activity probably by blocking its binding to DNA. Interacts with the Ku 70 kDa subunit of ds-DNA kinase. Interacts with PTTG1IP. In terms of processing, phosphorylated at Ser-165 by CDK1 during mitosis. Post-translationally, phosphorylated in vitro by ds-DNA kinase. Ubiquitinated through 'Lys-11' linkage of ubiquitin moieties by the anaphase promoting complex (APC) at the onset of anaphase, conducting to its degradation. 'Lys-11'-linked ubiquitination is mediated by the E2 ligase UBE2C/UBCH10. As to expression, expressed at low level in most tissues, except in adult testis, where it is highly expressed. Overexpressed in many patients suffering from pituitary adenomas, primary epithelial neoplasias, and esophageal cancer.

Its subcellular location is the cytoplasm. The protein resides in the nucleus. Regulatory protein, which plays a central role in chromosome stability, in the p53/TP53 pathway, and DNA repair. Probably acts by blocking the action of key proteins. During the mitosis, it blocks Separase/ESPL1 function, preventing the proteolysis of the cohesin complex and the subsequent segregation of the chromosomes. At the onset of anaphase, it is ubiquitinated, conducting to its destruction and to the liberation of ESPL1. Its function is however not limited to a blocking activity, since it is required to activate ESPL1. Negatively regulates the transcriptional activity and related apoptosis activity of TP53. The negative regulation of TP53 may explain the strong transforming capability of the protein when it is overexpressed. May also play a role in DNA repair via its interaction with Ku, possibly by connecting DNA damage-response pathways with sister chromatid separation. This is Securin (PTTG1) from Homo sapiens (Human).